A 431-amino-acid polypeptide reads, in one-letter code: Histidinol dehydrogenase (431 aa).

NAD(+)-binding residues include Tyr-127, Gln-189, and Asn-212. Substrate is bound by residues Ser-237, Gln-259, and His-262. The Zn(2+) site is built by Gln-259 and His-262. Active-site proton acceptor residues include Glu-326 and His-327. Substrate is bound by residues His-327, Asp-360, Glu-414, and His-419. Position 360 (Asp-360) interacts with Zn(2+). Residue His-419 coordinates Zn(2+).

This sequence belongs to the histidinol dehydrogenase family. Zn(2+) is required as a cofactor.

It catalyses the reaction L-histidinol + 2 NAD(+) + H2O = L-histidine + 2 NADH + 3 H(+). It participates in amino-acid biosynthesis; L-histidine biosynthesis; L-histidine from 5-phospho-alpha-D-ribose 1-diphosphate: step 9/9. Functionally, catalyzes the sequential NAD-dependent oxidations of L-histidinol to L-histidinaldehyde and then to L-histidine. This is Histidinol dehydrogenase from Xanthomonas oryzae pv. oryzae (strain KACC10331 / KXO85).